The chain runs to 171 residues: Small ribosomal subunit protein uS5 (171 aa).

The S5 DRBM domain maps to 16 to 79 (LREKMISVNR…EEARRKLVKI (64 aa)).

The protein belongs to the universal ribosomal protein uS5 family. In terms of assembly, part of the 30S ribosomal subunit. Contacts proteins S4 and S8.

In terms of biological role, with S4 and S12 plays an important role in translational accuracy. Its function is as follows. Located at the back of the 30S subunit body where it stabilizes the conformation of the head with respect to the body. This Thiobacillus denitrificans (strain ATCC 25259 / T1) protein is Small ribosomal subunit protein uS5.